The following is a 417-amino-acid chain: Glucose-1-phosphatase (417 aa).

The N-terminal stretch at M1 to A23 is a signal peptide. R41 lines the substrate pocket. The active-site Nucleophile is the H42. Positions 45, 118, and 220 each coordinate substrate. D315 functions as the Proton donor in the catalytic mechanism.

This sequence belongs to the histidine acid phosphatase family. In terms of assembly, homodimer.

Its subcellular location is the periplasm. It catalyses the reaction alpha-D-glucose 1-phosphate + H2O = D-glucose + phosphate. This chain is Glucose-1-phosphatase (agp), found in Providencia rettgeri.